We begin with the raw amino-acid sequence, 147 residues long: Globin (147 aa).

The 147-residue stretch at 1 to 147 folds into the Globin domain; sequence GLDGAQKTAL…LLTMLIKAHV (147 aa). Heme b is bound by residues H66 and H98.

Belongs to the globin family. As to quaternary structure, homodimer.

The protein localises to the cytoplasm. In Busycotypus canaliculatus (Channeled whelk), this protein is Globin.